The chain runs to 142 residues: Struthiocalcin-2 (142 aa).

Disulfide bonds link Cys-6–Cys-17, Cys-34–Cys-138, and Cys-113–Cys-130. A C-type lectin domain is found at 13–139; the sequence is FDGRCYGFFP…CSDRKPFICE (127 aa). Phosphoserine occurs at positions 62, 66, and 68.

The protein localises to the secreted. It is found in the extracellular space. It localises to the extracellular matrix. In Struthio camelus (Common ostrich), this protein is Struthiocalcin-2.